Here is a 241-residue protein sequence, read N- to C-terminus: Triosephosphate isomerase (241 aa).

Substrate is bound at residue 9 to 11 (NWK). Residue His-96 is the Electrophile of the active site. The Proton acceptor role is filled by Glu-165. Substrate-binding positions include Gly-171, Ser-204, and 225 to 226 (GG).

This sequence belongs to the triosephosphate isomerase family. Homodimer.

The protein resides in the cytoplasm. It carries out the reaction D-glyceraldehyde 3-phosphate = dihydroxyacetone phosphate. Its pathway is carbohydrate biosynthesis; gluconeogenesis. It functions in the pathway carbohydrate degradation; glycolysis; D-glyceraldehyde 3-phosphate from glycerone phosphate: step 1/1. Functionally, involved in the gluconeogenesis. Catalyzes stereospecifically the conversion of dihydroxyacetone phosphate (DHAP) to D-glyceraldehyde-3-phosphate (G3P). In Acaryochloris marina (strain MBIC 11017), this protein is Triosephosphate isomerase.